We begin with the raw amino-acid sequence, 153 residues long: Transcription antitermination protein NusB (153 aa).

The protein belongs to the NusB family.

In terms of biological role, involved in transcription antitermination. Required for transcription of ribosomal RNA (rRNA) genes. Binds specifically to the boxA antiterminator sequence of the ribosomal RNA (rrn) operons. The polypeptide is Transcription antitermination protein NusB (Nitratidesulfovibrio vulgaris (strain ATCC 29579 / DSM 644 / CCUG 34227 / NCIMB 8303 / VKM B-1760 / Hildenborough) (Desulfovibrio vulgaris)).